A 364-amino-acid chain; its full sequence is Dual-specificity RNA methyltransferase RlmN (364 aa).

The active-site Proton acceptor is the glutamate 91. The region spanning 97–333 (ESDRGTLCIS…VTVRKTRGDD (237 aa)) is the Radical SAM core domain. Cysteines 104 and 338 form a disulfide. [4Fe-4S] cluster-binding residues include cysteine 111, cysteine 115, and cysteine 118. Residues 164–165 (GE), serine 196, 218–220 (SLH), and asparagine 295 contribute to the S-adenosyl-L-methionine site. Cysteine 338 acts as the S-methylcysteine intermediate in catalysis.

The protein belongs to the radical SAM superfamily. RlmN family. [4Fe-4S] cluster is required as a cofactor.

The protein localises to the cytoplasm. The catalysed reaction is adenosine(2503) in 23S rRNA + 2 reduced [2Fe-2S]-[ferredoxin] + 2 S-adenosyl-L-methionine = 2-methyladenosine(2503) in 23S rRNA + 5'-deoxyadenosine + L-methionine + 2 oxidized [2Fe-2S]-[ferredoxin] + S-adenosyl-L-homocysteine. It catalyses the reaction adenosine(37) in tRNA + 2 reduced [2Fe-2S]-[ferredoxin] + 2 S-adenosyl-L-methionine = 2-methyladenosine(37) in tRNA + 5'-deoxyadenosine + L-methionine + 2 oxidized [2Fe-2S]-[ferredoxin] + S-adenosyl-L-homocysteine. Functionally, specifically methylates position 2 of adenine 2503 in 23S rRNA and position 2 of adenine 37 in tRNAs. m2A2503 modification seems to play a crucial role in the proofreading step occurring at the peptidyl transferase center and thus would serve to optimize ribosomal fidelity. In Neisseria meningitidis serogroup B (strain ATCC BAA-335 / MC58), this protein is Dual-specificity RNA methyltransferase RlmN.